Reading from the N-terminus, the 115-residue chain is T cell receptor delta variable 2 (115 aa).

Positions 1–19 (MQRISSLIHLSLFWAGVMS) are cleaved as a signal peptide. Positions 25-115 (PEHQTVPVSI…EGSYYCACDT (91 aa)) constitute an Ig-like domain. An intrachain disulfide couples cysteine 42 to cysteine 111.

Gamma-delta TR is a heterodimer composed of a gamma and delta chain; disulfide-linked. The gamma-delta TR is associated with the transmembrane signaling CD3 coreceptor proteins following the stoichiometry: a single gamma-delta TR heterodimer associates with one CD3D-CD3E heterodimer, one CD3G-CD3E heterodimer and one CD247 homodimer forming a stable octameric structure. Upon activation, gamma-delta TR complex associates with FCER1G to initiate intracellular signaling.

The protein localises to the cell membrane. In terms of biological role, v region of the variable domain of T cell receptor (TR) delta chain that participates in the antigen recognition. Gamma-delta TRs recognize a variety of self and foreign non-peptide antigens frequently expressed at the epithelial boundaries between the host and external environment, including endogenous lipids presented by MH-like protein CD1D and phosphoantigens presented by butyrophilin-like molecule BTN3A1. Upon antigen recognition induces rapid, innate-like immune responses involved in pathogen clearance and tissue repair. Binding of gamma-delta TR complex to antigen triggers phosphorylation of immunoreceptor tyrosine-based activation motifs (ITAMs) in the CD3 chains by the LCK and FYN kinases, allowing the recruitment, phosphorylation, and activation of ZAP70 that facilitates phosphorylation of the scaffolding proteins LCP2 and LAT. This lead to the formation of a supramolecular signalosome that recruits the phospholipase PLCG1, resulting in calcium mobilization and ERK activation, ultimately leading to T cell expansion and differentiation into effector cells. Gamma-delta TRs are produced through somatic rearrangement of a limited repertoire of variable (V), diversity (D), and joining (J) genes. The potential diversity of gamma-delta TRs is conferred by the unique ability to rearrange (D) genes in tandem and to utilize all three reading frames. The combinatorial diversity is considerably increased by the sequence exonuclease trimming and random nucleotide (N) region additions which occur during the V-(D)-J rearrangements. The polypeptide is T cell receptor delta variable 2 (Homo sapiens (Human)).